The sequence spans 187 residues: UPF0340 protein SMU_87 (187 aa).

This sequence belongs to the UPF0340 family.

The polypeptide is UPF0340 protein SMU_87 (Streptococcus mutans serotype c (strain ATCC 700610 / UA159)).